We begin with the raw amino-acid sequence, 302 residues long: Sulfate adenylyltransferase subunit 2 (302 aa).

This sequence belongs to the PAPS reductase family. CysD subfamily. As to quaternary structure, heterodimer composed of CysD, the smaller subunit, and CysN.

The enzyme catalyses sulfate + ATP + H(+) = adenosine 5'-phosphosulfate + diphosphate. It functions in the pathway sulfur metabolism; hydrogen sulfide biosynthesis; sulfite from sulfate: step 1/3. In terms of biological role, with CysN forms the ATP sulfurylase (ATPS) that catalyzes the adenylation of sulfate producing adenosine 5'-phosphosulfate (APS) and diphosphate, the first enzymatic step in sulfur assimilation pathway. APS synthesis involves the formation of a high-energy phosphoric-sulfuric acid anhydride bond driven by GTP hydrolysis by CysN coupled to ATP hydrolysis by CysD. The sequence is that of Sulfate adenylyltransferase subunit 2 from Yersinia enterocolitica serotype O:8 / biotype 1B (strain NCTC 13174 / 8081).